The primary structure comprises 489 residues: Diaminopimelate decarboxylase 2, chloroplastic (489 aa).

The transit peptide at 1-50 (MAAVTQFLSQPSSIRGTLNQYQLNQTSLSRIPFLSLKSTLKPLKRLSVKA) directs the protein to the chloroplast. A51 is subject to N-acetylalanine. An N6-(pyridoxal phosphate)lysine modification is found at K130. Pyridoxal 5'-phosphate-binding positions include G309 and 345–348 (EPGR). R348, R384, and Y388 together coordinate substrate. Catalysis depends on C416, which acts as the Proton donor. Residues E417 and Y445 each contribute to the substrate site. Y445 contributes to the pyridoxal 5'-phosphate binding site.

Belongs to the Orn/Lys/Arg decarboxylase class-II family. LysA subfamily. In terms of assembly, homodimer. The cofactor is pyridoxal 5'-phosphate.

Its subcellular location is the plastid. The protein localises to the chloroplast. The catalysed reaction is meso-2,6-diaminopimelate + H(+) = L-lysine + CO2. Its pathway is amino-acid biosynthesis; L-lysine biosynthesis via DAP pathway; L-lysine from DL-2,6-diaminopimelate: step 1/1. Functionally, specifically catalyzes the decarboxylation of meso-diaminopimelate (meso-DAP) to L-lysine. In Arabidopsis thaliana (Mouse-ear cress), this protein is Diaminopimelate decarboxylase 2, chloroplastic (LYSA2).